A 510-amino-acid chain; its full sequence is Light-independent protochlorophyllide reductase subunit B (510 aa).

Aspartate 36 provides a ligand contact to [4Fe-4S] cluster. The active-site Proton donor is aspartate 297. A substrate-binding site is contributed by 432–433 (GM).

This sequence belongs to the ChlB/BchB/BchZ family. Protochlorophyllide reductase is composed of three subunits; ChlL, ChlN and ChlB. Forms a heterotetramer of two ChlB and two ChlN subunits. The cofactor is [4Fe-4S] cluster.

The protein resides in the plastid. Its subcellular location is the chloroplast. The catalysed reaction is chlorophyllide a + oxidized 2[4Fe-4S]-[ferredoxin] + 2 ADP + 2 phosphate = protochlorophyllide a + reduced 2[4Fe-4S]-[ferredoxin] + 2 ATP + 2 H2O. It participates in porphyrin-containing compound metabolism; chlorophyll biosynthesis (light-independent). Component of the dark-operative protochlorophyllide reductase (DPOR) that uses Mg-ATP and reduced ferredoxin to reduce ring D of protochlorophyllide (Pchlide) to form chlorophyllide a (Chlide). This reaction is light-independent. The NB-protein (ChlN-ChlB) is the catalytic component of the complex. The protein is Light-independent protochlorophyllide reductase subunit B of Pinus thunbergii (Japanese black pine).